The following is a 118-amino-acid chain: Large ribosomal subunit protein uL24 (118 aa).

The protein belongs to the universal ribosomal protein uL24 family. As to quaternary structure, part of the 50S ribosomal subunit.

In terms of biological role, one of two assembly initiator proteins, it binds directly to the 5'-end of the 23S rRNA, where it nucleates assembly of the 50S subunit. Its function is as follows. One of the proteins that surrounds the polypeptide exit tunnel on the outside of the subunit. This Parasynechococcus marenigrum (strain WH8102) protein is Large ribosomal subunit protein uL24.